The sequence spans 203 residues: MTTAVGTPGSAITQRVHSLNRPNMVSVGTIIWLSSELMFFAGLFAMYFVARAQANGNWPPEPTELNLKLAVPVTAVLVASSFTCQMGVFAAEKGDVFGLRRWYFITLLMGAFFVAGQGYEYYHLVHEGTSISSSAYGSVFYITTGFHGLHVIGGLIAFVFLLIRTKVSKFTPAQATAAIVVSYYWHFVDIVWIGLFATIYFVR.

The next 5 membrane-spanning stretches (helical) occupy residues 30 to 50, 69 to 89, 102 to 122, 142 to 162, and 179 to 199; these read IIWLSSELMFFAGLFAMYFVA, LAVPVTAVLVASSFTCQMGVF, WYFITLLMGAFFVAGQGYEYY, ITTGFHGLHVIGGLIAFVFLL, and IVVSYYWHFVDIVWIGLFATI.

It belongs to the cytochrome c oxidase subunit 3 family.

It is found in the cell membrane. It catalyses the reaction 4 Fe(II)-[cytochrome c] + O2 + 8 H(+)(in) = 4 Fe(III)-[cytochrome c] + 2 H2O + 4 H(+)(out). In Nocardia farcinica (strain IFM 10152), this protein is Probable cytochrome c oxidase subunit 3 (ctaE).